Here is a 203-residue protein sequence, read N- to C-terminus: Ribonuclease HII (203 aa).

One can recognise an RNase H type-2 domain in the interval 18-203; it reads GQYAGVDEVG…SFRPVREALA (186 aa). A divalent metal cation is bound by residues aspartate 24, glutamate 25, and aspartate 116.

This sequence belongs to the RNase HII family. The cofactor is Mn(2+). Mg(2+) serves as cofactor.

The protein localises to the cytoplasm. The catalysed reaction is Endonucleolytic cleavage to 5'-phosphomonoester.. Functionally, endonuclease that specifically degrades the RNA of RNA-DNA hybrids. The sequence is that of Ribonuclease HII from Shewanella pealeana (strain ATCC 700345 / ANG-SQ1).